A 247-amino-acid chain; its full sequence is 3-deoxy-manno-octulosonate cytidylyltransferase (247 aa).

It belongs to the KdsB family.

The protein resides in the cytoplasm. The catalysed reaction is 3-deoxy-alpha-D-manno-oct-2-ulosonate + CTP = CMP-3-deoxy-beta-D-manno-octulosonate + diphosphate. It functions in the pathway nucleotide-sugar biosynthesis; CMP-3-deoxy-D-manno-octulosonate biosynthesis; CMP-3-deoxy-D-manno-octulosonate from 3-deoxy-D-manno-octulosonate and CTP: step 1/1. It participates in bacterial outer membrane biogenesis; lipopolysaccharide biosynthesis. Functionally, activates KDO (a required 8-carbon sugar) for incorporation into bacterial lipopolysaccharide in Gram-negative bacteria. The polypeptide is 3-deoxy-manno-octulosonate cytidylyltransferase (Methylobacterium radiotolerans (strain ATCC 27329 / DSM 1819 / JCM 2831 / NBRC 15690 / NCIMB 10815 / 0-1)).